Consider the following 861-residue polypeptide: APC membrane recruitment protein 3 (861 aa).

Disordered regions lie at residues 1–77 (MELK…PKGG), 179–206 (AEGKSLPSPGDPSDPGGRRSKAFLPPGE), 261–289 (PSLELNEGPESPTQAAQGLESKVPRGPLQ), 351–415 (PLCP…FPRD), 514–558 (RGPT…GGAT), 576–644 (GLLA…SQKE), 716–742 (MLEQKQSSSSPSMTTIHGLPYSASTQD), and 786–822 (AHGSQLDSEPRSAPAARWSSQGHHPESLGLTLNSQQE). Positions 362–384 (SKASSIDTGTPKSEQPESVSTSD) are enriched in polar residues. The segment covering 518 to 530 (PRAPPTPGQPAAP) has biased composition (pro residues). A compositionally biased stretch (low complexity) spans 584–595 (ALGGATQGTGTL). The segment covering 598–609 (DASREEETRGHS) has biased composition (basic and acidic residues). Polar residues-rich tracts occupy residues 615-629 (SMESAATSTTDTSGK) and 719-730 (QKQSSSSPSMTT).

The protein belongs to the Amer family.

Its subcellular location is the cell membrane. In terms of biological role, regulator of the canonical Wnt signaling pathway. Acts by specifically binding phosphatidylinositol 4,5-bisphosphate (PtdIns(4,5)P2), translocating to the cell membrane. This is APC membrane recruitment protein 3 (AMER3) from Homo sapiens (Human).